The following is a 744-amino-acid chain: Catalase-peroxidase (744 aa).

Residues M1 to A22 form the signal peptide. Positions W114 to Y234 form a cross-link, tryptophyl-tyrosyl-methioninium (Trp-Tyr) (with M-260). The active-site Proton acceptor is H115. The segment at residues Y234–M260 is a cross-link (tryptophyl-tyrosyl-methioninium (Tyr-Met) (with W-114)). H275 contacts heme b.

The protein belongs to the peroxidase family. Peroxidase/catalase subfamily. Homodimer or homotetramer. Requires heme b as cofactor. In terms of processing, formation of the three residue Trp-Tyr-Met cross-link is important for the catalase, but not the peroxidase activity of the enzyme.

It carries out the reaction H2O2 + AH2 = A + 2 H2O. The enzyme catalyses 2 H2O2 = O2 + 2 H2O. Functionally, bifunctional enzyme with both catalase and broad-spectrum peroxidase activity. The chain is Catalase-peroxidase from Azorhizobium caulinodans (strain ATCC 43989 / DSM 5975 / JCM 20966 / LMG 6465 / NBRC 14845 / NCIMB 13405 / ORS 571).